The following is a 191-amino-acid chain: Scytalone dehydratase PfmaJ (191 aa).

Substrate contacts are provided by Tyr-25, Tyr-45, and Phe-48. Residues His-80 and His-105 contribute to the active site. Asn-126 provides a ligand contact to substrate.

This sequence belongs to the scytalone dehydratase family. As to quaternary structure, homotrimer. Each subunit contains an active site, located in the central part of the hydrophobic core of the monomer, which functions independently.

Its subcellular location is the endosome. It catalyses the reaction scytalone = 1,3,8-trihydroxynaphthalene + H2O. The protein operates within pigment biosynthesis; melanin biosynthesis. In terms of biological role, scytalone dehydratase involved the biosynthesis of dihydroxynaphthalene (DHN)-melanin, a bluish-green pigment forming a dark layer in the conidial wall that protects the conidia from UV radiations. The first step of the pathway is the production of the pentaketide 1,3,6,8-tetrahydroxynaphthalene (1,3,6,8-THN or T4HN) by the polyketide synthase PfmaE though condensation of acetyl-CoA with malonyl-CoA. T4HN is not stable and easily oxidizes into the stable form flaviolin. T4HN is also substrate of the hydroxynaphthalene reductase PfmaG to yield scytalone. The scytalone dehydratase PfmaJ then reduces scytalone to 1,3,8-THN. 1,3,8-THN is then substrate of the hydroxynaphthalene reductase PfmaI to yield vermelone. Vermelone is further converted by the multicopper oxidase PfmaD to 1,8-DHN. Finally the laccase PFICI_06862 transforms 1,8-DHN to DHN-melanin. The roles of the 5-oxoprolinase PfmaA and the proline iminopeptidase PfmaB within the cluster have not been elucidated yet. The chain is Scytalone dehydratase PfmaJ from Pestalotiopsis fici (strain W106-1 / CGMCC3.15140).